The following is a 170-amino-acid chain: Zinc finger protein 576 (170 aa).

The interval 1–29 (MEDPNPEENMKQQDSPKERSPQSPGGNIC) is disordered. A compositionally biased stretch (basic and acidic residues) spans 8-20 (ENMKQQDSPKERS). 4 consecutive C2H2-type zinc fingers follow at residues 34 to 57 (PKCT…KREH), 71 to 93 (FICF…QRSH), 112 to 134 (FPCP…RQMH), and 143 to 165 (FACT…YIRH).

This sequence belongs to the krueppel C2H2-type zinc-finger protein family.

It localises to the nucleus. Its function is as follows. May be involved in transcriptional regulation. This chain is Zinc finger protein 576 (ZNF576), found in Homo sapiens (Human).